We begin with the raw amino-acid sequence, 359 residues long: MVSLPKDRMRQLEKRFEIIESQMAKNPDSGTYVKLASEYADLQPIVTSIRTLNALSIEITELETIISDKLTDVEMRNLAQEELPPLFQKMEKLEKELQILLLPKDITDEKSAIIEIRAGTGGSEAALFVGDLFRMYERYANAYNWKVEVISLNEGEVGGYKEIIATISGKGVFSKLKFESGVHRVQRVPETETSGRIHTSAATVAVLPEAEEIDIEIRPEDIRIDTMRASGAGGQHVNTTDSAVRITHIPTGIMVVQAEKSQHQNRARALQILRARLFDIEQKKAESERSASRKNQVGSGDRSERIRTYNFPQGRVTDHRINLTLYKLDRILEGDLDELINALISDYQTALLTEMDGNG.

Gln-235 bears the N5-methylglutamine mark. Residues 284–311 are disordered; sequence KAESERSASRKNQVGSGDRSERIRTYNF.

Belongs to the prokaryotic/mitochondrial release factor family. Post-translationally, methylated by PrmC. Methylation increases the termination efficiency of RF1.

The protein resides in the cytoplasm. Functionally, peptide chain release factor 1 directs the termination of translation in response to the peptide chain termination codons UAG and UAA. In Bartonella quintana (strain Toulouse) (Rochalimaea quintana), this protein is Peptide chain release factor 1.